Reading from the N-terminus, the 64-residue chain is Crotamine CRO3 (64 aa).

An N-terminal signal peptide occupies residues 1–22 (MILYLLFAFLFLAFLSEPGNAY). Intrachain disulfides connect C25-C57, C32-C51, and C39-C58.

This sequence belongs to the crotamine-myotoxin family. As to quaternary structure, monomer. In terms of tissue distribution, expressed by the venom gland.

The protein resides in the secreted. In terms of biological role, cationic peptide that possesses multiple functions. It acts as a cell-penetrating peptide (CPP), and as a potent voltage-gated potassium channel (Kv) inhibitor. It exhibits antimicrobial activities, hind limb paralysis, and severe muscle necrosis by a non-enzymatic mechanism. The polypeptide is Crotamine CRO3 (CRO3) (Crotalus durissus terrificus (South American rattlesnake)).